Here is a 539-residue protein sequence, read N- to C-terminus: MSSNPENSGVNANNNTGTGNADAITGAQQNMVLQPRQLQEMAAKFRTLLTEARNVGETTPRGKELMFQAAKIKQVYDALTLNRRRQQAAQAYNNTSNSNSSNPASIPTENVPNSSQQQQQQQQQTRNNSNKFSNMIKQVLTPEENQEYEKLWQNFQVRHTSIKEKETYLKQNIDRLEQEINKQTDEGPKQQLQEKKIELLNDWKVLKIEYTKLFNNYQNSKKTFYVECARHNPALHKFLQESTQQQRVQQQRVQQQQQQQQQQQQQQQQQQQQQQQRQGQNQRKISSSNSTEIPSVTGPDALKSQQQQQNTITATNNPRGNVNTSQTEQSKAKVTNVNATASMLNNISSSKSAIFKQTEPAIPISENISTKTPAPVAYRSNRPTITGGSAMNASALNTPATTKLPPYEMDTQRVMSKRKLRELVKTVGIDEGDGETVIDGDVEELLLDLADDFVTNVTAFSCRLAKHRKSDNLEARDIQLHLERNWNIRIPGYSADEIRSTRKWNPSQNYNQKLQSITSDKVAAAKNNGNNVASLNTKK.

Disordered regions lie at residues 1–28 and 86–129; these read MSSN…TGAQ and QQAA…RNNS. Ser-2 carries the post-translational modification N-acetylserine. 2 stretches are compositionally biased toward low complexity: residues 7–27 and 87–105; these read NSGV…ITGA and QAAQ…NPAS. Ser-129 is subject to Phosphoserine. Coiled coils occupy residues 153–202 and 239–285; these read QNFQ…LLND and LQES…QRKI. A compositionally biased stretch (low complexity) spans 274–283; it reads QQQRQGQNQR. A disordered region spans residues 274 to 332; the sequence is QQQRQGQNQRKISSSNSTEIPSVTGPDALKSQQQQQNTITATNNPRGNVNTSQTEQSKA. Polar residues-rich tracts occupy residues 284 to 294 and 310 to 332; these read KISSSNSTEIP and NTIT…QSKA. Ser-286 carries the phosphoserine modification. Residues 413–490 enclose the Histone-fold domain; it reads RVMSKRKLRE…HLERNWNIRI (78 aa).

The protein belongs to the TAF12 family. As to quaternary structure, component of the 1.8 MDa SAGA (Spt-Ada-Gcn5 acetyltransferase) complex, which is composed of 19 subunits TRA1, SPT7, TAF5, NGG1/ADA3, SGF73, SPT20/ADA5, SPT8, TAF12, TAF6, HFI1/ADA1, UBP8, GCN5, ADA2, SPT3, SGF29, TAF10, TAF9, SGF11 and SUS1. The SAGA complex is composed of 4 modules, namely the HAT (histone acetyltransferase) module (GCN5, ADA2, NGG1/ADA3 and SGF29), the DUB (deubiquitinating) module (UBP8, SGF11, SGF73 and SUS1), the core or TAF (TBP-associated factor) module (TAF5, TAF6, TAF9, TAF10 and TAF12), and the Tra1 or SPT (Suppressor of Ty) module (TRA1, HFI1/ADA1, SPT3, SPT7, SPT8 and SPT20/ADA5). The Tra1/SPT module binds activators, the core module recruits TBP (TATA-binding protein), the HAT module contains the histone H3 acetyltransferase GCN5, and the DUB module comprises the histone H2B deubiquitinase UBP8. Also identified in an altered form of SAGA, named SALSA (SAGA altered, Spt8 absent) or SLIK (SAGA-like) complex, which contains a C-terminal truncated form of SPT7 and is missing SPT8. However, it has been shown that the SAGA and SAGA-like SALSA/SLIK transcriptional coactivators are structurally and biochemically equivalent. Component of the 1.2 MDa TFIID complex, which is composed of TATA-binding protein (TBP) and the 14 TBP-associated factors (TAFs). It comprises 1 copy of each TAF1, TAF2, TAF3, TAF7, TAF8, TAF11, TAF13, 2 copies of each TAF4, TAF5, TAF6, TAF9, TAF10, TAF12, and 3 copies of TAF14. In TFIID, TAF12 heterodimerizes with TAF4, forming ultimately an octamer consisting of a TAF6-TAF9 heterotetramer core flanked by TAF4-TAF12 dimers on either side, similar to the histone H2A-H2B-H3-H4 octamer.

It localises to the nucleus. Functions as a component of both the DNA-binding general transcription initiation factor complex TFIID and the transcription coactivator SAGA complex. Binding of TFIID to a promoter (with or without TATA element) is the initial step in pre-initiation complex (PIC) formation. TFIID plays a key role in the regulation of gene expression by RNA polymerase II through different activities such as transcription activator interaction, core promoter recognition and selectivity, TFIIA and TFIIB interaction, chromatin modification (histone acetylation by TAF1), facilitation of DNA opening and initiation of transcription. SAGA acts as a general cofactor required for essentially all RNA polymerase II transcription. At the promoters, SAGA is required for transcription pre-initiation complex (PIC) recruitment. It influences RNA polymerase II transcriptional activity through different activities such as TBP interaction (via core/TAF module) and promoter selectivity, interaction with transcription activators (via Tra1/SPT module), and chromatin modification through histone acetylation (via HAT module) and deubiquitination (via DUB module). SAGA preferentially acetylates histones H3 (to form H3K9ac, H3K14ac, H3K18ac and H3K23ac) and H2B and deubiquitinates histone H2B. SAGA interacts with DNA via upstream activating sequences (UASs). Also identified in a modified version of SAGA named SALSA or SLIK. The cleavage of SPT7 and the absence of the SPT8 subunit in SLIK neither drive any major conformational differences in its structure compared with SAGA, nor significantly affect HAT, DUB, or DNA-binding activities. This is SAGA complex/transcription factor TFIID complex subunit TAF12 (TAF12) from Saccharomyces cerevisiae (strain ATCC 204508 / S288c) (Baker's yeast).